Reading from the N-terminus, the 967-residue chain is MAVALDSQIDAPLEVEGCLIMKVEKDPEWASEPILEGSDSSETFRKCFRQFCYEDVTGPHEAFSKLWELCCRWLKPEMRSKEQILELLVIEQFLTILPEKIQAWAQKQCPQSGEEAVALVVHLEKETGRLRQQVSSPVHREKHSPLGAAWEVADFQPEQVETQPRAVSREEPGSLHSGHQEQLNRKRERRPLPKNARPSPWVPALADEWNTLDQEVTTTRLPAGSQEPVKDVHVARGFSYRKSVHQIPAQRDLYRDFRKENVGNVVSLGSAVSTSNKITRLEQRKEPWTLGLHSSNKRSILRSNYVKEKSVHAIQVPARSAGKTWREQQQWGLEDEKIAGVHWSYEETKTFLAILKESRFYETLQACPRNSQVYGAVAEWLRECGFLRTPEQCRTKFKSLQKSYRKVRNGHMLEPCAFFEDMDALLNPAARAPSTDKPKEMIPVPRLKRIAISAKEHISLVEEEEAAEDSDDDEIGIEFIRKSEIHGAPVLFQNLSGVHWGYEETKTFLDILRETRFYEALQACHRKSKLYGAVAEQLRECGFLRTPEQCRTKFKSLQKSYRKVKNGHVLESCAFYKEMDALINSRASAPSPSTPEEVPSPSRQERGGIEVEPQEPTGWEPEETSQEAVIEDSCSERMSEEEIVQEPEFQGPPGLLQSPNDFEIGSSIKEDPTQIVYKDMEQHRALIEKSKRVVSQSTDPSKYRKRECISGRQWENLQGIRQGKPMSQPRDLGKAVVHQRPFVGKRPYRLLKYGESFGRSTRLMCRMTHHKENPYKCGVCGKCFGRSRSLIRHQRIHTGEKPFKCLDCGKSFNDSSNFGAHQRIHTGEKPYRCGECGKCFSQSSSLIIHQRTHTGEKPYQCGECGKSFTNSSHFSAHRRVHTGENPYKCVDCEKSFNNCTRFREHRRIHTGEKPYGCAQCGKRFSKSSVLTKHREVHVREKPLPHPPSLYCPENPHKGKTDEFRKTF.

A Glycyl lysine isopeptide (Lys-Gly) (interchain with G-Cter in SUMO2) cross-link involves residue Lys-22. In terms of domain architecture, SCAN box spans 45-127; sequence RKCFRQFCYE…ALVVHLEKET (83 aa). Residues 150–205 are disordered; sequence WEVADFQPEQVETQPRAVSREEPGSLHSGHQEQLNRKRERRPLPKNARPSPWVPAL. Positions 167-185 are enriched in basic and acidic residues; sequence VSREEPGSLHSGHQEQLNR. The 72-residue stretch at 229–300 folds into the KRAB domain; it reads VKDVHVARGF…GLHSSNKRSI (72 aa). Residues Lys-242, Lys-259, Lys-277, Lys-337, Lys-482, and Lys-529 each participate in a glycyl lysine isopeptide (Lys-Gly) (interchain with G-Cter in SUMO2) cross-link. Low complexity predominate over residues 586–602; the sequence is RASAPSPSTPEEVPSPS. Positions 586–626 are disordered; it reads RASAPSPSTPEEVPSPSRQERGGIEVEPQEPTGWEPEETSQ. Phosphoserine is present on residues Ser-591 and Ser-600. Residues Lys-734, Lys-745, and Lys-752 each participate in a glycyl lysine isopeptide (Lys-Gly) (interchain with G-Cter in SUMO2) cross-link. 6 C2H2-type zinc fingers span residues 775 to 797, 803 to 825, 831 to 853, 859 to 881, 887 to 909, and 915 to 937; these read YKCG…QRIH, FKCL…QRIH, YRCG…QRTH, YQCG…RRVH, YKCV…RRIH, and YGCA…REVH. The disordered stretch occupies residues 941 to 967; the sequence is KPLPHPPSLYCPENPHKGKTDEFRKTF. Positions 954–967 are enriched in basic and acidic residues; it reads NPHKGKTDEFRKTF.

This sequence belongs to the krueppel C2H2-type zinc-finger protein family.

It is found in the nucleus. Its function is as follows. May be involved in transcriptional regulation. This is Zinc finger protein with KRAB and SCAN domains 2 (ZKSCAN2) from Homo sapiens (Human).